A 226-amino-acid chain; its full sequence is PKHD-type hydroxylase Bind_0236 (226 aa).

In terms of domain architecture, Fe2OG dioxygenase spans 78 to 178; that stretch reads TIFPPLFNRY…RIASFFWIQS (101 aa). Fe cation-binding residues include His96, Asp98, and His159. Residue Arg169 coordinates 2-oxoglutarate.

It depends on Fe(2+) as a cofactor. The cofactor is L-ascorbate.

This Beijerinckia indica subsp. indica (strain ATCC 9039 / DSM 1715 / NCIMB 8712) protein is PKHD-type hydroxylase Bind_0236.